Consider the following 207-residue polypeptide: MSDALKELAEYLSEKRSDDVVSTDVNAMGELSVTVAPAQMVGFIEFLKTDRTCRFSTLIDITAVDYPSRDRRFDVVYHFLSMYQNHRVRVRAAIREEDTLPSISGVHPGAGWYEREIYDMFGILFTGHADLRRLLTDYGFRGHPLRKDFPTTGYTEVRYDEELKRVVYEPVSLVQEYRQFDFMSPWEGAQYVLPGDEKADDKAGETA.

The protein belongs to the complex I 30 kDa subunit family. NDH-1 is composed of 14 different subunits. Subunits NuoB, C, D, E, F, and G constitute the peripheral sector of the complex.

It is found in the cell inner membrane. The enzyme catalyses a quinone + NADH + 5 H(+)(in) = a quinol + NAD(+) + 4 H(+)(out). NDH-1 shuttles electrons from NADH, via FMN and iron-sulfur (Fe-S) centers, to quinones in the respiratory chain. The immediate electron acceptor for the enzyme in this species is believed to be ubiquinone. Couples the redox reaction to proton translocation (for every two electrons transferred, four hydrogen ions are translocated across the cytoplasmic membrane), and thus conserves the redox energy in a proton gradient. The polypeptide is NADH-quinone oxidoreductase subunit C (Jannaschia sp. (strain CCS1)).